We begin with the raw amino-acid sequence, 478 residues long: Ribulose bisphosphate carboxylase large chain (478 aa).

A propeptide spanning residues Met-1–Ser-2 is cleaved from the precursor. The substrate site is built by Asn-123 and Thr-173. Lys-175 serves as the catalytic Proton acceptor. Lys-177 is a substrate binding site. Mg(2+) is bound by residues Lys-201, Asp-203, and Glu-204. At Lys-201 the chain carries N6-carboxylysine. Residue Ser-208 is modified to Phosphoserine. His-294 functions as the Proton acceptor in the catalytic mechanism. Positions 295 and 327 each coordinate substrate. The residue at position 330 (Thr-330) is a Phosphothreonine. Substrate is bound at residue Ser-379.

It belongs to the RuBisCO large chain family. Type I subfamily. As to quaternary structure, heterohexadecamer of 8 large chains and 8 small chains; disulfide-linked. The disulfide link is formed within the large subunit homodimers. Mg(2+) is required as a cofactor. In terms of processing, the disulfide bond which can form in the large chain dimeric partners within the hexadecamer appears to be associated with oxidative stress and protein turnover.

It localises to the plastid. The protein localises to the chloroplast. It carries out the reaction 2 (2R)-3-phosphoglycerate + 2 H(+) = D-ribulose 1,5-bisphosphate + CO2 + H2O. The catalysed reaction is D-ribulose 1,5-bisphosphate + O2 = 2-phosphoglycolate + (2R)-3-phosphoglycerate + 2 H(+). Its function is as follows. RuBisCO catalyzes two reactions: the carboxylation of D-ribulose 1,5-bisphosphate, the primary event in carbon dioxide fixation, as well as the oxidative fragmentation of the pentose substrate in the photorespiration process. Both reactions occur simultaneously and in competition at the same active site. This is Ribulose bisphosphate carboxylase large chain from Lepidium virginicum (Virginia pepperweed).